A 72-amino-acid polypeptide reads, in one-letter code: Gene 35 protein (72 aa).

This chain is Gene 35 protein (35), found in Mycobacterium phage L5 (Mycobacteriophage L5).